A 255-amino-acid polypeptide reads, in one-letter code: Indole-3-glycerol phosphate synthase (255 aa).

This sequence belongs to the TrpC family.

The catalysed reaction is 1-(2-carboxyphenylamino)-1-deoxy-D-ribulose 5-phosphate + H(+) = (1S,2R)-1-C-(indol-3-yl)glycerol 3-phosphate + CO2 + H2O. The protein operates within amino-acid biosynthesis; L-tryptophan biosynthesis; L-tryptophan from chorismate: step 4/5. The chain is Indole-3-glycerol phosphate synthase from Streptococcus pneumoniae (strain Hungary19A-6).